The sequence spans 337 residues: DNA-directed RNA polymerase subunit alpha (337 aa).

Residues 1–233 (MVREKVTVST…DLFIPFLHME (233 aa)) are alpha N-terminal domain (alpha-NTD). Residues 265–337 (KKIALKSIFI…FVIDLAKNKF (73 aa)) form an alpha C-terminal domain (alpha-CTD) region.

The protein belongs to the RNA polymerase alpha chain family. As to quaternary structure, in plastids the minimal PEP RNA polymerase catalytic core is composed of four subunits: alpha, beta, beta', and beta''. When a (nuclear-encoded) sigma factor is associated with the core the holoenzyme is formed, which can initiate transcription.

Its subcellular location is the plastid. The protein resides in the chloroplast. It catalyses the reaction RNA(n) + a ribonucleoside 5'-triphosphate = RNA(n+1) + diphosphate. Functionally, DNA-dependent RNA polymerase catalyzes the transcription of DNA into RNA using the four ribonucleoside triphosphates as substrates. This chain is DNA-directed RNA polymerase subunit alpha, found in Solanum lycopersicum (Tomato).